The chain runs to 304 residues: Non-specific ribonucleoside hydrolase RihC (304 aa).

Residue H233 is part of the active site.

The protein belongs to the IUNH family. RihC subfamily.

Functionally, hydrolyzes both purine and pyrimidine ribonucleosides with a broad-substrate specificity. The protein is Non-specific ribonucleoside hydrolase RihC of Shigella flexneri serotype 5b (strain 8401).